The chain runs to 465 residues: MQLLRALGVFHVSMILFSATLGTGIFVTPKAVLKYSSLNIPVSLSIWAGCGLLSIMSALCNAEIATTYPLSGASYYFLKRTLGSSVAFLSLWIKLFAHFLGIGAQCLLIATSVIQCFYSGCPAPELPTKCLALAILWSFGIVSARGIKTVAWFNTVSSFIKLSVLCLISLTVLLVNGKKENVSRFENALDAELPNASQIADAILQVSYSYLGSSVLIVIAGEIKRPTETIPKTLIYGISIVTVLYLLTNISYLAVLTSQEIIFSDSVGVTWMNRVFPSIQWISSFLISAFLLGSVSCGIVSASRVFYSASQEGEFPSIYSMLNDHHSPAVADIQIVILSSVAIISSSIIYLVKYVSLGSFCINLLQMIGLLKIRYQNPDIPRPYKVWLPFIFGSIALSLFLIFTPVIQSPSIEHVYQVVFLFCGFLCYWLQANLNGHATCFDTITCYCQLLFNISPSEDPEEQKN.

Residues 1 to 6 (MQLLRA) lie on the Cytoplasmic side of the membrane. Residues 7 to 27 (LGVFHVSMILFSATLGTGIFV) traverse the membrane as a helical segment. Residues 28-39 (TPKAVLKYSSLN) are Extracellular-facing. The helical transmembrane segment at 40–60 (IPVSLSIWAGCGLLSIMSALC) threads the bilayer. Over 61 to 81 (NAEIATTYPLSGASYYFLKRT) the chain is Cytoplasmic. A helical membrane pass occupies residues 82–102 (LGSSVAFLSLWIKLFAHFLGI). Residues 103-132 (GAQCLLIATSVIQCFYSGCPAPELPTKCLA) lie on the Extracellular side of the membrane. Residues 133–153 (LAILWSFGIVSARGIKTVAWF) form a helical membrane-spanning segment. Position 154 (Asn-154) is a topological domain, cytoplasmic. Residues 155-175 (TVSSFIKLSVLCLISLTVLLV) form a helical membrane-spanning segment. Over 176–202 (NGKKENVSRFENALDAELPNASQIADA) the chain is Extracellular. The chain crosses the membrane as a helical span at residues 203 to 223 (ILQVSYSYLGSSVLIVIAGEI). Residues 224 to 234 (KRPTETIPKTL) lie on the Cytoplasmic side of the membrane. Residues 235–255 (IYGISIVTVLYLLTNISYLAV) traverse the membrane as a helical segment. At 256-280 (LTSQEIIFSDSVGVTWMNRVFPSIQ) the chain is on the extracellular side. The helical transmembrane segment at 281–301 (WISSFLISAFLLGSVSCGIVS) threads the bilayer. Over 302–327 (ASRVFYSASQEGEFPSIYSMLNDHHS) the chain is Cytoplasmic. The chain crosses the membrane as a helical span at residues 328 to 351 (PAVADIQIVILSSVAIISSSIIYL). At 352–356 (VKYVS) the chain is on the extracellular side. The helical transmembrane segment at 357-375 (LGSFCINLLQMIGLLKIRY) threads the bilayer. Over 376–386 (QNPDIPRPYKV) the chain is Cytoplasmic. The helical transmembrane segment at 387–407 (WLPFIFGSIALSLFLIFTPVI) threads the bilayer. Residues 408–409 (QS) lie on the Extracellular side of the membrane. A helical transmembrane segment spans residues 410–430 (PSIEHVYQVVFLFCGFLCYWL). Residues 431-465 (QANLNGHATCFDTITCYCQLLFNISPSEDPEEQKN) are Cytoplasmic-facing.

This sequence belongs to the amino acid-polyamine-organocation (APC) superfamily. Probably forms multimers, perhaps with an unknown protein(s). As to expression, expressed in kidney and red blood cells (at protein level). Expressed in kidney along the collecting ducts in the cortex, outer and inner medulla. May be expressed in placenta, lungs, spleen and skeletal muscles.

The protein localises to the apical cell membrane. It localises to the basal cell membrane. It is found in the cytoplasm. Functionally, probably mediates sodium- and chloride-independent uptake of neutral amino acids. The sequence is that of Solute carrier family 7 member 12 from Mus musculus (Mouse).